A 193-amino-acid polypeptide reads, in one-letter code: Ribosome maturation factor RimM (193 aa).

One can recognise a PRC barrel domain in the interval Asp-100–Gly-173.

Belongs to the RimM family. Binds ribosomal protein uS19.

It localises to the cytoplasm. Its function is as follows. An accessory protein needed during the final step in the assembly of 30S ribosomal subunit, possibly for assembly of the head region. Essential for efficient processing of 16S rRNA. May be needed both before and after RbfA during the maturation of 16S rRNA. It has affinity for free ribosomal 30S subunits but not for 70S ribosomes. The polypeptide is Ribosome maturation factor RimM (Rhizobium etli (strain CIAT 652)).